Consider the following 117-residue polypeptide: Appetite-regulating hormone (117 aa).

An N-terminal signal peptide occupies residues 1 to 23 (MPSLGTMCSLLLFSVLWVDLAMA). Ser-26 is lipidated: O-decanoyl serine; alternate. The O-hexanoyl serine; alternate moiety is linked to residue Ser-26. A lipid anchor (O-octanoyl serine; alternate) is attached at Ser-26. The interval 30–68 (PEHQKLQQRKESKKPPAKLQPRALEGSLGPEDTSQVEEA) is disordered. The span at 31–43 (EHQKLQQRKESKK) shows a compositional bias: basic and acidic residues. Residues 52 to 75 (ALEGSLGPEDTSQVEEAEDELEIR) constitute a propeptide, removed in mature form. Leucine amide is present on Leu-98. The propeptide at 99–117 (GKFLQEVLWEDTNEALADE) is removed in mature form.

Belongs to the motilin family. Post-translationally, O-octanoylated by GOAT/MBOAT4. O-octanoylation is essential for ghrelin activity. Amidation of Leu-98 is essential for obestatin activity.

The protein localises to the secreted. Functionally, ghrelin is the ligand for growth hormone secretagogue receptor type 1 (GHSR). Induces the release of growth hormone from the pituitary. Has an appetite-stimulating effect, induces adiposity and stimulates gastric acid secretion. Involved in growth regulation. In terms of biological role, obestatin may be the ligand for GPR39. May have an appetite-reducing effect resulting in decreased food intake. May reduce gastric emptying activity and jejunal motility. In Canis lupus familiaris (Dog), this protein is Appetite-regulating hormone (GHRL).